Reading from the N-terminus, the 147-residue chain is Large ribosomal subunit protein uL13 (147 aa).

This sequence belongs to the universal ribosomal protein uL13 family. In terms of assembly, part of the 50S ribosomal subunit.

This protein is one of the early assembly proteins of the 50S ribosomal subunit, although it is not seen to bind rRNA by itself. It is important during the early stages of 50S assembly. The sequence is that of Large ribosomal subunit protein uL13 from Polaromonas naphthalenivorans (strain CJ2).